A 103-amino-acid polypeptide reads, in one-letter code: N(4)-acetylcytidine amidohydrolase (103 aa).

The ASCH domain occupies isoleucine 6–glutamine 94. Lysine 21 serves as the catalytic Proton acceptor. The Nucleophile role is filled by threonine 24. Catalysis depends on glutamate 74, which acts as the Proton donor.

This sequence belongs to the N(4)-acetylcytidine amidohydrolase family.

It carries out the reaction N(4)-acetylcytidine + H2O = cytidine + acetate + H(+). The enzyme catalyses N(4)-acetyl-2'-deoxycytidine + H2O = 2'-deoxycytidine + acetate + H(+). The catalysed reaction is N(4)-acetylcytosine + H2O = cytosine + acetate + H(+). In terms of biological role, catalyzes the hydrolysis of N(4)-acetylcytidine (ac4C). In Salmonella schwarzengrund (strain CVM19633), this protein is N(4)-acetylcytidine amidohydrolase (yqfB).